Here is a 348-residue protein sequence, read N- to C-terminus: Caricain (348 aa).

The signal sequence occupies residues Met-1–Cys-16. The propeptide at Leu-17–Asn-132 is activation peptide. Asn-86 carries an N-linked (GlcNAc...) asparagine glycan. 3 disulfide bridges follow: Cys-154–Cys-195, Cys-188–Cys-227, and Cys-285–Cys-336. Residue Cys-157 is part of the active site. Cys-157 lines the E64 pocket. Residues His-291 and Asn-311 contribute to the active site.

This sequence belongs to the peptidase C1 family. In terms of assembly, monomer.

The enzyme catalyses Hydrolysis of proteins with broad specificity for peptide bonds, similar to those of papain and chymopapain.. With respect to regulation, repressed by the active-site-directed cysteine protease inhibitor E64 (L-trans-epoxysuccinyl-leucylamide-(4-guanido)-butane) produced by Aspergillus japonicus. Functionally, cysteine proteinase with a high level of diversity in substrate specificity. The chain is Caricain from Carica papaya (Papaya).